The chain runs to 447 residues: MELRMKKVSVIAAAVAATLAAGSAFAVDFHGYMRAGVGVSADGGQQVTFEKQKIGRLGNEGDIYGEIQLGQEVYNNNGKTFYVDSMIAVTSNGSNDWEGTASNCGTTVSHPDGQDPSATTKCVDDAEFALRQFNVQAKGVLDFAPEATLWAGKRYYQRHDIHISDFYYWNISGAGAGVEGIEAGPGQLSFAWVRNDRNDNFKLGENNPGDTPDAGNDGGAANVNTLDLRYAGLPVWENGSLELGLNYALVNETDDASDAAKDAKDGVMFTAELTQGLDSGFNKTVFQYGTEGYSKTMAFYGDGSWYGAEANDGASGYRLINWGVIGMGQNWEMGHQLVYGVGEDMWDGQDKLETMSVVVRPMYKWDDNHKTIFEAGYAIDDNDGAENKFGKLTVAQAWSAGSSFWARPEIRVYASYLTADKDDNSNAFDGGRSDDTFQFGVQAEAWW.

An N-terminal signal peptide occupies residues 1-26 (MELRMKKVSVIAAAVAATLAAGSAFA).

This sequence belongs to the porin LamB (TC 1.B.3) family. As to quaternary structure, homotrimer formed of three 18-stranded antiparallel beta-barrels, containing three independent channels.

Its subcellular location is the cell outer membrane. It carries out the reaction beta-maltose(in) = beta-maltose(out). In terms of biological role, involved in the transport of maltose and maltodextrins. In Vibrio campbellii (strain ATCC BAA-1116), this protein is Maltoporin.